The sequence spans 196 residues: Respiratory growth induced protein 1 (196 aa).

Positions 28–48 are disordered; that stretch reads KSRSSSITSIESEGSIQSVLK. Residues 29–45 are compositionally biased toward low complexity; the sequence is SRSSSITSIESEGSIQS.

Belongs to the RGI1 family.

The protein localises to the cell membrane. Functionally, involved in the control of energetic metabolism and significantly contribute to cell fitness, especially under respiratory growth conditions. This is Respiratory growth induced protein 1 (RGI1) from Debaryomyces hansenii (strain ATCC 36239 / CBS 767 / BCRC 21394 / JCM 1990 / NBRC 0083 / IGC 2968) (Yeast).